The primary structure comprises 91 residues: Acylphosphatase (91 aa).

In terms of domain architecture, Acylphosphatase-like spans 6–91 (CMRCYISGRV…WEDYITFDVL (86 aa)). Active-site residues include arginine 21 and asparagine 39.

The protein belongs to the acylphosphatase family.

It carries out the reaction an acyl phosphate + H2O = a carboxylate + phosphate + H(+). This chain is Acylphosphatase (acyP), found in Legionella pneumophila (strain Lens).